Reading from the N-terminus, the 102-residue chain is MSKVLKLTSVTLAASSLAAAGYFYAFDRDSYHYKNASWKRIGDHVQGILDRKEDIAVQRTSSEARDVTVRPIKETMKDLWNEQVRNTAQWVYSFGSNTSTKA.

A helical membrane pass occupies residues 4–26; that stretch reads VLKLTSVTLAASSLAAAGYFYAF.

The protein belongs to the MICOS complex subunit Mic12 family. As to quaternary structure, component of the mitochondrial contact site and cristae organizing system (MICOS) complex.

The protein localises to the mitochondrion inner membrane. Its function is as follows. Component of the MICOS complex, a large protein complex of the mitochondrial inner membrane that plays crucial roles in the maintenance of crista junctions, inner membrane architecture, and formation of contact sites to the outer membrane. In Lachancea thermotolerans (strain ATCC 56472 / CBS 6340 / NRRL Y-8284) (Yeast), this protein is MICOS complex subunit MIC12 (AIM5).